A 683-amino-acid polypeptide reads, in one-letter code: Protein hook (683 aa).

Residues 5–123 (NGMYYSLLEW…RLLQLVLGCA (119 aa)) enclose the Calponin-homology (CH) domain. Coiled-coil stretches lie at residues 135–440 (EIMC…LKCG) and 484–594 (QTAL…AKEV).

The protein belongs to the hook family. As to quaternary structure, homodimer. Interacts with microtubules via its N-terminus.

The protein resides in the cytoplasm. It localises to the cytoskeleton. It is found in the endosome. The protein localises to the synapse. Its function is as follows. Involved in endocytic trafficking by stabilizing organelles of the endocytic pathway. Probably acts as a cytoskeletal linker protein required to tether endosome vesicles to the cytoskeleton. Involved in modulation of endocytosis at stages required for down-regulation of membrane proteins that control synapse size. Not involved in synaptic vesicle recycling. Required in R7 cells for boss endocytosis into multivesicular bodies (MVBs). Has a role in regulating adult longevity. The sequence is that of Protein hook from Drosophila grimshawi (Hawaiian fruit fly).